A 375-amino-acid chain; its full sequence is Esterase AN6793 (375 aa).

Residues 138-158 (RHPQPGLDPGHGHRHKRMPPL) are disordered.

The protein belongs to the sidJ hydrolase family. Homodimer.

It participates in secondary metabolite biosynthesis. Esterase; part of a cluster that mediates the biosynthesis of a yet undetermined secondary metabolite. With the HR-PKS AN6791, produces a pathway intermediate compound with molecular weight 258. This is Esterase AN6793 from Emericella nidulans (strain FGSC A4 / ATCC 38163 / CBS 112.46 / NRRL 194 / M139) (Aspergillus nidulans).